A 200-amino-acid polypeptide reads, in one-letter code: Recombination protein RecR (200 aa).

A C4-type zinc finger spans residues 59-74 (CSTCGNIDSQNPCTVC). The Toprim domain maps to 82–177 (SIIVVVADVA…KVTRLAHGVP (96 aa)).

It belongs to the RecR family.

Functionally, may play a role in DNA repair. It seems to be involved in an RecBC-independent recombinational process of DNA repair. It may act with RecF and RecO. The sequence is that of Recombination protein RecR from Rhodopseudomonas palustris (strain ATCC BAA-98 / CGA009).